Consider the following 638-residue polypeptide: Sodium- and chloride-dependent neutral and basic amino acid transporter B(0+) (638 aa).

Residues 1 to 44 are Cytoplasmic-facing; it reads MDRLKCPNFFKCRQKEKVTASSENFHVGENDENQERGNWSKKSD. 3 helical membrane-spanning segments follow: residues 45-65, 72-92, and 110-130; these read YLLS…FPYL, GAFL…LFFL, and ILPL…FVAI. Residues 131 to 230 lie on the Extracellular side of the membrane; it reads YYNVIIAYSL…RSSGMDETGV (100 aa). Asn155, Asn163, Asn174, Asn185, Asn193, and Asn198 each carry an N-linked (GlcNAc...) asparagine glycan. A run of 2 helical transmembrane segments spans residues 231-251 and 257-277; these read VVWY…AALF and SGKV…ILLI. A glycan (N-linked (GlcNAc...) asparagine) is linked at Asn298. 7 helical membrane passes run 311 to 331, 344 to 364, 395 to 415, 453 to 473, 476 to 496, 524 to 544, and 559 to 579; these read AATQ…ALSS, IIVC…IFSI, LAQL…LLTL, ILFL…VHLI, FCAG…IIWI, CWFV…LVKF, and VALG…MAII. At 580-638 the chain is on the cytoplasmic side; it reads KIVQAEGNILQRIISCCRPASNWGPYLEKHRGERYRDMAEPAKETDHEIPTISGSTKPE. Basic and acidic residues predominate over residues 618–628; it reads AEPAKETDHEI. The segment at 618-638 is disordered; the sequence is AEPAKETDHEIPTISGSTKPE.

The protein belongs to the sodium:neurotransmitter symporter (SNF) (TC 2.A.22) family. SLC6A14 subfamily. Expressed in the distal region of the intestinal tract: cecum and colon.

Its subcellular location is the membrane. The protein resides in the apical cell membrane. It carries out the reaction glycine(out) + chloride(out) + 2 Na(+)(out) = glycine(in) + chloride(in) + 2 Na(+)(in). The catalysed reaction is L-leucine(out) + chloride(out) + 2 Na(+)(out) = L-leucine(in) + chloride(in) + 2 Na(+)(in). The enzyme catalyses L-glutamine(out) + chloride(out) + 2 Na(+)(out) = L-glutamine(in) + chloride(in) + 2 Na(+)(in). It catalyses the reaction L-arginine(out) + chloride(out) + 2 Na(+)(out) = L-arginine(in) + chloride(in) + 2 Na(+)(in). It carries out the reaction (R)-carnitine(out) + chloride(out) + 2 Na(+)(out) = (R)-carnitine(in) + chloride(in) + 2 Na(+)(in). The catalysed reaction is O-propanoyl-(R)-carnitine(out) + chloride(out) + 2 Na(+)(out) = O-propanoyl-(R)-carnitine(in) + chloride(in) + 2 Na(+)(in). The enzyme catalyses L-isoleucine(out) + chloride(out) + 2 Na(+)(out) = L-isoleucine(in) + chloride(in) + 2 Na(+)(in). It catalyses the reaction L-methionine(out) + chloride(out) + 2 Na(+)(out) = L-methionine(in) + chloride(in) + 2 Na(+)(in). It carries out the reaction L-valine(out) + chloride(out) + 2 Na(+)(out) = L-valine(in) + chloride(in) + 2 Na(+)(in). The catalysed reaction is L-alanine(out) + chloride(out) + 2 Na(+)(out) = L-alanine(in) + chloride(in) + 2 Na(+)(in). The enzyme catalyses L-serine(out) + chloride(out) + 2 Na(+)(out) = L-serine(in) + chloride(in) + 2 Na(+)(in). It catalyses the reaction L-cysteine(out) + chloride(out) + 2 Na(+)(out) = L-cysteine(in) + chloride(in) + 2 Na(+)(in). It carries out the reaction L-asparagine(out) + chloride(out) + 2 Na(+)(out) = L-asparagine(in) + chloride(in) + 2 Na(+)(in). The catalysed reaction is L-threonine(out) + chloride(out) + 2 Na(+)(out) = L-threonine(in) + chloride(in) + 2 Na(+)(in). The enzyme catalyses L-phenylalanine(out) + chloride(out) + 2 Na(+)(out) = L-phenylalanine(in) + chloride(in) + 2 Na(+)(in). It catalyses the reaction L-tryptophan(out) + chloride(out) + 2 Na(+)(out) = L-tryptophan(in) + chloride(in) + 2 Na(+)(in). It carries out the reaction L-tyrosine(out) + chloride(out) + 2 Na(+)(out) = L-tyrosine(in) + chloride(in) + 2 Na(+)(in). The catalysed reaction is L-histidine(out) + chloride(out) + 2 Na(+)(out) = L-histidine(in) + chloride(in) + 2 Na(+)(in). The enzyme catalyses L-lysine(out) + chloride(out) + 2 Na(+)(out) = L-lysine(in) + chloride(in) + 2 Na(+)(in). It catalyses the reaction O-butanoyl-(R)-carnitine(out) + chloride(out) + 2 Na(+)(out) = O-butanoyl-(R)-carnitine(in) + chloride(in) + 2 Na(+)(in). Functionally, amino acid transporter that plays an important role in the absorption of amino acids in the intestinal tract. Mediates the uptake of a broad range of neutral and cationic amino acids (with the exception of proline) in a Na(+)/Cl(-)-dependent manner. Transports non-alpha-amino acids such as beta-alanine with low affinity, and has a higher affinity for dipolar and cationic amino acids such as leucine and lysine. Can also transport carnitine, butyrylcarnitine and propionylcarnitine coupled to the transmembrane gradients of Na(+) and Cl(-). The polypeptide is Sodium- and chloride-dependent neutral and basic amino acid transporter B(0+) (Mus musculus (Mouse)).